Consider the following 93-residue polypeptide: MTRSLKKGPFVADHLLNKIENLNAKEEKKVIITWSRASTIVPAMIGHTIAVHNGREHLPVFITELMIRHKLGEFASTRTFRSHLKKSDKKSRR.

The protein belongs to the universal ribosomal protein uS19 family.

It localises to the plastid. It is found in the chloroplast. Protein S19 forms a complex with S13 that binds strongly to the 16S ribosomal RNA. The polypeptide is Small ribosomal subunit protein uS19c (Zygnema circumcarinatum (Green alga)).